A 270-amino-acid polypeptide reads, in one-letter code: 4-hydroxy-tetrahydrodipicolinate reductase (270 aa).

7-12 (GANGRM) serves as a coordination point for NAD(+). Arginine 34 is a binding site for NADP(+). NAD(+)-binding positions include 97 to 99 (GTT) and 121 to 124 (SGNM). The active-site Proton donor/acceptor is histidine 155. Histidine 156 provides a ligand contact to (S)-2,3,4,5-tetrahydrodipicolinate. Catalysis depends on lysine 159, which acts as the Proton donor. Residue 165–166 (GT) coordinates (S)-2,3,4,5-tetrahydrodipicolinate.

Belongs to the DapB family.

The protein localises to the cytoplasm. The catalysed reaction is (S)-2,3,4,5-tetrahydrodipicolinate + NAD(+) + H2O = (2S,4S)-4-hydroxy-2,3,4,5-tetrahydrodipicolinate + NADH + H(+). It catalyses the reaction (S)-2,3,4,5-tetrahydrodipicolinate + NADP(+) + H2O = (2S,4S)-4-hydroxy-2,3,4,5-tetrahydrodipicolinate + NADPH + H(+). Its pathway is amino-acid biosynthesis; L-lysine biosynthesis via DAP pathway; (S)-tetrahydrodipicolinate from L-aspartate: step 4/4. Functionally, catalyzes the conversion of 4-hydroxy-tetrahydrodipicolinate (HTPA) to tetrahydrodipicolinate. This is 4-hydroxy-tetrahydrodipicolinate reductase from Bartonella tribocorum (strain CIP 105476 / IBS 506).